The following is a 406-amino-acid chain: MKKKQQHPGGGADPWPHGAPMGGAPPGLGSWKRRVPLLPFLRFSLRDYGFCMATLLVFCLGSLLYQLSGGPPRFLLDLRQYLGNSTYLDDHGPPPSKVLPFPSQVVYNRVGKCGSRTVVLLLRILSEKHGFNLVTSDIHNKTRLTKNEQMELIKNISTAEQPYLFTRHVHFLNFSRFGGDQPVYINIIRDPVNRFLSNYFFRRFGDWRGEQNHMIRTPSMRQEERYLDINECILENYPECSNPRLFYIIPYFCGQHPRCREPGEWALERAKLNVNENFLLVGILEELEDVLLLLERFLPHYFKGVLSIYKDPEHRKLGNMTVTVKKTVPSPEAVQILYQRMRYEYEFYHYVKEQFHLLKRKFGLKSHVSKPPLRPHFFIPTPLETEEPIDDEEQDDEKWLEDIYKR.

Residues 1–49 (MKKKQQHPGGGADPWPHGAPMGGAPPGLGSWKRRVPLLPFLRFSLRDYG) lie on the Cytoplasmic side of the membrane. A helical; Signal-anchor for type II membrane protein transmembrane segment spans residues 50–70 (FCMATLLVFCLGSLLYQLSGG). The Lumenal portion of the chain corresponds to 71–406 (PPRFLLDLRQ…EKWLEDIYKR (336 aa)). 3 N-linked (GlcNAc...) asparagine glycosylation sites follow: Asn-84, Asn-140, and Asn-155. The active site involves His-168. N-linked (GlcNAc...) asparagine glycans are attached at residues Asn-173 and Asn-319. Positions 387–399 (EPIDDEEQDDEKW) are enriched in acidic residues. The interval 387–406 (EPIDDEEQDDEKWLEDIYKR) is disordered.

Belongs to the sulfotransferase 3 family. Widely expressed.

The protein localises to the golgi apparatus membrane. In terms of biological role, sulfotransferase that catalyzes the transfer of sulfate to the position 2 of uronyl residues in glycosaminoglycan chains. Has mainly activity toward iduronyl residues in dermatan sulfate, and weaker activity toward glucuronyl residues of chondroitin sulfate. Has little to no activity toward desulfated N-resulfated heparin or N-sulfoheparosan. This Homo sapiens (Human) protein is Uronyl 2-sulfotransferase.